We begin with the raw amino-acid sequence, 464 residues long: Argininosuccinate lyase 2 (464 aa).

It belongs to the lyase 1 family. Argininosuccinate lyase subfamily.

The protein localises to the cytoplasm. The enzyme catalyses 2-(N(omega)-L-arginino)succinate = fumarate + L-arginine. It functions in the pathway amino-acid biosynthesis; L-arginine biosynthesis; L-arginine from L-ornithine and carbamoyl phosphate: step 3/3. The sequence is that of Argininosuccinate lyase 2 from Pseudomonas fluorescens (strain Pf0-1).